Consider the following 464-residue polypeptide: Argininosuccinate lyase (464 aa).

The protein belongs to the lyase 1 family. Argininosuccinate lyase subfamily.

It localises to the cytoplasm. The catalysed reaction is 2-(N(omega)-L-arginino)succinate = fumarate + L-arginine. It functions in the pathway amino-acid biosynthesis; L-arginine biosynthesis; L-arginine from L-ornithine and carbamoyl phosphate: step 3/3. The sequence is that of Argininosuccinate lyase from Ectopseudomonas mendocina (strain ymp) (Pseudomonas mendocina).